The following is a 289-amino-acid chain: Protein shisa-2 homolog (289 aa).

The N-terminal stretch at 1–27 is a signal peptide; sequence MWAGCHPDAASLLRLLLAALLAAGALA. Over 28 to 104 the chain is Extracellular; sequence SGEYCHGWLD…RADKDGPDGS (77 aa). The segment at 81 to 102 is disordered; sequence GCDNDRQQGAGEPGRADKDGPD. A helical membrane pass occupies residues 105–125; that stretch reads AVPIYVPFLIVGSVFVAFIVL. Over 126–289 the chain is Cytoplasmic; that stretch reads GSLVAACCCR…EQKMYPAVTV (164 aa). Residues 162-198 form a disordered region; it reads PSASTSRGSSSRQSSTAASSSSSANSGARAPPTRSQT. Residues 163–191 show a composition bias toward low complexity; that stretch reads SASTSRGSSSRQSSTAASSSSSANSGARA.

Belongs to the shisa family.

It localises to the endoplasmic reticulum membrane. Functionally, plays an essential role in the maturation of presomitic mesoderm cells by individual attenuation of both FGF and WNT signaling. This is Protein shisa-2 homolog (SHISA2) from Bos taurus (Bovine).